The primary structure comprises 394 residues: MSKEKFERKKPHVNVGTIGHVDHGKTTLTAAITTVLAKTFGGNARAFDQIDNAPEEKARGITISTSHVEYDTPSRHYAHVDCPGHADYVKNMITGAAQMDGAILVVAATDGPMPQTREHILLGRQVGVPYIIVFLNKCDMVDDEELLELVEMEVRELLSQYDFPGDDTPVIRGSALKALEGDAEWEAKIIELAEALDSYIPEPERAIDQPFLLPIEDVFSISGRGTVVTGRVERGIVKVGEEVEIVGIKDTTKTTCTGVEMFRKLLDEGRAGENVGVLLRGTKRDEIERGQVLAKPGSIKPHTTFESEVYILSKDEGGRHTPFFKGYRPQFYFRTTDVTGTIELPEGVEMVMPGDNIQMKVTLIAPIAMDQGLRFAIREGGRTVGAGVVAKVIA.

The tr-type G domain occupies 10–204 (KPHVNVGTIG…ALDSYIPEPE (195 aa)). The tract at residues 19-26 (GHVDHGKT) is G1. 19-26 (GHVDHGKT) contacts GTP. Thr26 contributes to the Mg(2+) binding site. The segment at 60-64 (GITIS) is G2. The G3 stretch occupies residues 81–84 (DCPG). Residues 81-85 (DCPGH) and 136-139 (NKCD) each bind GTP. The tract at residues 136–139 (NKCD) is G4. The interval 174–176 (SAL) is G5.

The protein belongs to the TRAFAC class translation factor GTPase superfamily. Classic translation factor GTPase family. EF-Tu/EF-1A subfamily. Monomer.

Its subcellular location is the cytoplasm. The catalysed reaction is GTP + H2O = GDP + phosphate + H(+). Its function is as follows. GTP hydrolase that promotes the GTP-dependent binding of aminoacyl-tRNA to the A-site of ribosomes during protein biosynthesis. The chain is Elongation factor Tu 1 from Photorhabdus laumondii subsp. laumondii (strain DSM 15139 / CIP 105565 / TT01) (Photorhabdus luminescens subsp. laumondii).